The following is a 441-amino-acid chain: ATP-dependent protease ATPase subunit HslU (441 aa).

ATP contacts are provided by residues isoleucine 18 and 60–65; that span reads GVGKTE. The interval 131–158 is disordered; it reads ILDALLPRPRGSEYDHARDESSTRQTFR. Over residues 140–152 the composition is skewed to basic and acidic residues; that stretch reads RGSEYDHARDESS. Aspartate 254, glutamate 320, and arginine 392 together coordinate ATP.

This sequence belongs to the ClpX chaperone family. HslU subfamily. As to quaternary structure, a double ring-shaped homohexamer of HslV is capped on each side by a ring-shaped HslU homohexamer. The assembly of the HslU/HslV complex is dependent on binding of ATP.

The protein localises to the cytoplasm. Its function is as follows. ATPase subunit of a proteasome-like degradation complex; this subunit has chaperone activity. The binding of ATP and its subsequent hydrolysis by HslU are essential for unfolding of protein substrates subsequently hydrolyzed by HslV. HslU recognizes the N-terminal part of its protein substrates and unfolds these before they are guided to HslV for hydrolysis. The sequence is that of ATP-dependent protease ATPase subunit HslU from Chromohalobacter salexigens (strain ATCC BAA-138 / DSM 3043 / CIP 106854 / NCIMB 13768 / 1H11).